We begin with the raw amino-acid sequence, 183 residues long: Adenine phosphoribosyltransferase (183 aa).

It belongs to the purine/pyrimidine phosphoribosyltransferase family. As to quaternary structure, homodimer.

The protein localises to the cytoplasm. It carries out the reaction AMP + diphosphate = 5-phospho-alpha-D-ribose 1-diphosphate + adenine. It functions in the pathway purine metabolism; AMP biosynthesis via salvage pathway; AMP from adenine: step 1/1. Its function is as follows. Catalyzes a salvage reaction resulting in the formation of AMP, that is energically less costly than de novo synthesis. The protein is Adenine phosphoribosyltransferase of Salmonella arizonae (strain ATCC BAA-731 / CDC346-86 / RSK2980).